A 457-amino-acid chain; its full sequence is Equilibrative nucleoside transporter 1 (457 aa).

At 1 to 12 (MTTSHQPQDRYK) the chain is on the cytoplasmic side. A helical membrane pass occupies residues 13–29 (AVWLIFFVLGLGTLLPW). Residues 30–82 (NFFITATQYFTSRLNTSQNISLVTNQSCESTEALADPSVSLPARSSLSAIFNN) lie on the Extracellular side of the membrane. Asn-44, Asn-48, and Asn-54 each carry an N-linked (GlcNAc...) asparagine glycan. Residues 83 to 107 (VMTLCAMLPLLIFTCLNSFLHQKVS) form a helical membrane-spanning segment. Over 108–111 (QSLR) the chain is Cytoplasmic. A helical membrane pass occupies residues 112–130 (ILGSLLAILLVFLVTATLV). Topologically, residues 131-138 (KVQMDALS) are extracellular. The chain crosses the membrane as a helical span at residues 139–157 (FFIITMIKIVLINSFGAIL). Residues 158-174 (QASLFGLAGVLPANYTA) are Cytoplasmic-facing. A helical membrane pass occupies residues 175-199 (PIMSGQGLAGFFTSVAMICAVASGS). Residues 200 to 206 (KLSESAF) lie on the Extracellular side of the membrane. The helical transmembrane segment at 207-227 (GYFITACAVVILAILCYLALP) threads the bilayer. The Cytoplasmic segment spans residues 228–291 (WMEFYRHYLQ…IKAILKSIWV (64 aa)). Ser-254 is modified (phosphoserine). The segment covering 255–266 (EGEEPRGGREES) has biased composition (basic and acidic residues). The interval 255–275 (EGEEPRGGREESGVPGPNSLP) is disordered. At Ser-273 the chain carries Phosphoserine. Residues 292–311 (LALSVCFIFTVTIGLFPAVT) traverse the membrane as a helical segment. At 312 to 323 (AEVESSIAGTSP) the chain is on the extracellular side. Residues 324-343 (WKNCYFIPVACFLNFNVFDW) form a helical membrane-spanning segment. Residues 344–360 (LGRSLTAICMWPGQDSR) lie on the Cytoplasmic side of the membrane. A helical transmembrane segment spans residues 361–379 (WLPVLVACRVVFIPLLMLC). Topologically, residues 380–394 (NVKQHHYLPSLFKHD) are extracellular. A helical membrane pass occupies residues 395 to 414 (VWFITFMAAFAFSNGYLASL). Over 415–432 (CMCFGPKKVKPAEAETAG) the chain is Cytoplasmic. Residues 433–453 (NIMSFFLCLGLALGAVLSFLL) traverse the membrane as a helical segment. Residues 454-457 (RALV) are Extracellular-facing.

It belongs to the SLC29A/ENT transporter (TC 2.A.57) family. Identified in a complex with STOM. In terms of tissue distribution, expressed in jejunum, liver and lung. Expressed in testis at the blood-testis barrier (at protein level). Expressed in ventricular myocytes (at protein level). Expressed in kidney.

Its subcellular location is the basolateral cell membrane. The protein localises to the apical cell membrane. The protein resides in the cell membrane. The catalysed reaction is adenosine(in) = adenosine(out). It carries out the reaction guanosine(in) = guanosine(out). It catalyses the reaction inosine(in) = inosine(out). The enzyme catalyses uridine(out) = uridine(in). The catalysed reaction is thymidine(in) = thymidine(out). It carries out the reaction cytidine(in) = cytidine(out). It catalyses the reaction adenine(out) = adenine(in). The enzyme catalyses guanine(out) = guanine(in). The catalysed reaction is thymine(out) = thymine(in). It carries out the reaction uracil(in) = uracil(out). It catalyses the reaction hypoxanthine(out) = hypoxanthine(in). Its activity is regulated as follows. Transport activity is sensitive to low concentrations of the inhibitor nitrobenzylmercaptopurine riboside (NBMPR). Its function is as follows. Uniporter involved in the facilitative transport of nucleosides and nucleobases, and contributes to maintaining their cellular homeostasis. Functions as a Na(+)-independent transporter. Involved in the transport of nucleosides such as adenosine, thymidine and uridine. Also transports purine nucleobases (hypoxanthine, adenine, guanine) and pyrimidine nucleobases (thymine, uracil). Mediates basolateral nucleoside uptake into Sertoli cells, thereby regulating the transport of nucleosides in testis across the blood-testis barrier. Regulates inosine levels in brown adipocytes tissues (BAT) and extracellular inosine levels, which controls BAT-dependent energy expenditure. In Rattus norvegicus (Rat), this protein is Equilibrative nucleoside transporter 1.